The primary structure comprises 488 residues: Phenylalanine--tRNA ligase alpha subunit (488 aa).

Residues threonine 315, 354–356 (QLD), phenylalanine 394, and phenylalanine 419 each bind L-phenylalanine.

This sequence belongs to the class-II aminoacyl-tRNA synthetase family. Phe-tRNA synthetase alpha subunit type 2 subfamily. As to quaternary structure, tetramer of two alpha and two beta subunits. Mg(2+) serves as cofactor.

The protein localises to the cytoplasm. The catalysed reaction is tRNA(Phe) + L-phenylalanine + ATP = L-phenylalanyl-tRNA(Phe) + AMP + diphosphate + H(+). This chain is Phenylalanine--tRNA ligase alpha subunit, found in Pyrobaculum arsenaticum (strain DSM 13514 / JCM 11321 / PZ6).